The following is a 441-amino-acid chain: Proline--tRNA ligase (441 aa).

Belongs to the class-II aminoacyl-tRNA synthetase family. ProS type 2 subfamily. Homodimer.

The protein resides in the cytoplasm. The enzyme catalyses tRNA(Pro) + L-proline + ATP = L-prolyl-tRNA(Pro) + AMP + diphosphate. Functionally, catalyzes the attachment of proline to tRNA(Pro) in a two-step reaction: proline is first activated by ATP to form Pro-AMP and then transferred to the acceptor end of tRNA(Pro). In Bartonella henselae (strain ATCC 49882 / DSM 28221 / CCUG 30454 / Houston 1) (Rochalimaea henselae), this protein is Proline--tRNA ligase.